The sequence spans 568 residues: 2-succinyl-5-enolpyruvyl-6-hydroxy-3-cyclohexene-1-carboxylate synthase (568 aa).

Belongs to the TPP enzyme family. MenD subfamily. In terms of assembly, homodimer. The cofactor is Mg(2+). Mn(2+) is required as a cofactor. Requires thiamine diphosphate as cofactor.

It carries out the reaction isochorismate + 2-oxoglutarate + H(+) = 5-enolpyruvoyl-6-hydroxy-2-succinyl-cyclohex-3-ene-1-carboxylate + CO2. The protein operates within quinol/quinone metabolism; 1,4-dihydroxy-2-naphthoate biosynthesis; 1,4-dihydroxy-2-naphthoate from chorismate: step 2/7. It participates in quinol/quinone metabolism; menaquinone biosynthesis. Functionally, catalyzes the thiamine diphosphate-dependent decarboxylation of 2-oxoglutarate and the subsequent addition of the resulting succinic semialdehyde-thiamine pyrophosphate anion to isochorismate to yield 2-succinyl-5-enolpyruvyl-6-hydroxy-3-cyclohexene-1-carboxylate (SEPHCHC). The sequence is that of 2-succinyl-5-enolpyruvyl-6-hydroxy-3-cyclohexene-1-carboxylate synthase from Haemophilus influenzae (strain PittGG).